The following is a 474-amino-acid chain: Glutamate--tRNA ligase (474 aa).

Positions 11 to 21 (PSPTGFLHIGG) match the 'HIGH' region motif. The 'KMSKS' region signature appears at 240–244 (KLSKR). K243 contacts ATP.

This sequence belongs to the class-I aminoacyl-tRNA synthetase family. Glutamate--tRNA ligase type 1 subfamily. Monomer.

The protein resides in the cytoplasm. It carries out the reaction tRNA(Glu) + L-glutamate + ATP = L-glutamyl-tRNA(Glu) + AMP + diphosphate. Functionally, catalyzes the attachment of glutamate to tRNA(Glu) in a two-step reaction: glutamate is first activated by ATP to form Glu-AMP and then transferred to the acceptor end of tRNA(Glu). The chain is Glutamate--tRNA ligase from Nitrobacter winogradskyi (strain ATCC 25391 / DSM 10237 / CIP 104748 / NCIMB 11846 / Nb-255).